Here is a 167-residue protein sequence, read N- to C-terminus: Gem-associated protein 6 (167 aa).

Positions 7–74 (KGPLEWQDYI…VQTVETMNEG (68 aa)) constitute a Sm domain. The region spanning 69–167 (ETMNEGDHRV…LIEGHLTASQ (99 aa)) is the AD domain. Residues Ser-95 and Ser-166 each carry the phosphoserine modification.

As to quaternary structure, part of the core SMN complex that contains SMN1, GEMIN2/SIP1, DDX20/GEMIN3, GEMIN4, GEMIN5, GEMIN6, GEMIN7, GEMIN8 and STRAP/UNRIP. Part of the SMN-Sm complex that contains SMN1, GEMIN2/SIP1, DDX20/GEMIN3, GEMIN4, GEMIN5, GEMIN6, GEMIN7, GEMIN8, STRAP/UNRIP and the Sm proteins SNRPB, SNRPD1, SNRPD2, SNRPD3, SNRPE, SNRPF and SNRPG. Interacts with GEMIN7; the interaction is direct. Interacts with GEMIN8; the interaction is direct. Interacts with SNRPB, SNRPD2, SNRPD3 and SNRPE; the interaction is direct.

The protein localises to the nucleus. It is found in the nucleoplasm. It localises to the gem. Its subcellular location is the cytoplasm. The SMN complex catalyzes the assembly of small nuclear ribonucleoproteins (snRNPs), the building blocks of the spliceosome, and thereby plays an important role in the splicing of cellular pre-mRNAs. Most spliceosomal snRNPs contain a common set of Sm proteins SNRPB, SNRPD1, SNRPD2, SNRPD3, SNRPE, SNRPF and SNRPG that assemble in a heptameric protein ring on the Sm site of the small nuclear RNA to form the core snRNP (Sm core). In the cytosol, the Sm proteins SNRPD1, SNRPD2, SNRPE, SNRPF and SNRPG are trapped in an inactive 6S pICln-Sm complex by the chaperone CLNS1A that controls the assembly of the core snRNP. To assemble core snRNPs, the SMN complex accepts the trapped 5Sm proteins from CLNS1A forming an intermediate. Binding of snRNA inside 5Sm triggers eviction of the SMN complex, thereby allowing binding of SNRPD3 and SNRPB to complete assembly of the core snRNP. In Homo sapiens (Human), this protein is Gem-associated protein 6 (GEMIN6).